The following is a 306-amino-acid chain: sn-1-specific diacylglycerol lipase ABHD11 (306 aa).

Residues G19 to E40 form a disordered region. Over residues A23–S33 the composition is skewed to low complexity. K78 carries the N6-succinyllysine modification. Residues S132, D228, and H287 each act as charge relay system in the active site.

It belongs to the AB hydrolase superfamily. Interacts with OGDH and DLST; this interaction maintains the functional lipoylation of the 2-oxoglutarate dehydrogenase complex. In terms of processing, phosphorylated. As to expression, ubiquitously expressed. Highly expressed in small intestine, prostate and thyroid, while aorta and colon tissues exhibit weak expression levels.

The protein resides in the mitochondrion. The protein localises to the mitochondrion matrix. It catalyses the reaction 1-octadecanoyl-2-(5Z,8Z,11Z,14Z-eicosatetraenoyl)-sn-glycerol + H2O = 2-(5Z,8Z,11Z,14Z-eicosatetraenoyl)-glycerol + octadecanoate + H(+). The catalysed reaction is a 1,2-diacyl-sn-glycerol + H2O = a 2-acylglycerol + a fatty acid + H(+). The enzyme catalyses a 1,3-diacyl-sn-glycerol + H2O = a 1-acyl-sn-glycerol + a fatty acid + H(+). It carries out the reaction 1-octadecanoyl-2-(9Z-octadecenoyl)-sn-glycerol + H2O = 2-(9Z-octadecenoyl)-glycerol + octadecanoate + H(+). It catalyses the reaction 1-octadecanoyl-2-(4Z,7Z,10Z,13Z,16Z,19Z-docosahexaenoyl)-sn-glycerol + H2O = 2-(4Z,7Z,10Z,13Z,16Z,19Z-docosahexaenoyl)-glycerol + octadecanoate + H(+). The catalysed reaction is 1,2-didecanoylglycerol + H2O = decanoylglycerol + decanoate + H(+). Functionally, catalyzes the hydrolysis of diacylglycerol in vitro and may function as a key regulator in lipid metabolism, namely by regulating the intracellular levels of diacylglycerol. 1,2-diacyl-sn-glycerols are the preferred substrate over 1,3-diacyl-sn-glycerols. The enzyme hydrolyzes stearate in preference to palmitate from the sn-1 position of 1,2-diacyl-sn-glycerols. Maintains the functional lipoylation of the 2-oxoglutarate dehydrogenase complex (OGDHc) through its interaction with the OGDHc by preventing the formation of lipoyl adducts. In addition, is also required for the expansion and differentiation of embryonic stem cells (ESCs). This is sn-1-specific diacylglycerol lipase ABHD11 from Homo sapiens (Human).